A 679-amino-acid polypeptide reads, in one-letter code: Glycine--tRNA ligase beta subunit (679 aa).

Belongs to the class-II aminoacyl-tRNA synthetase family. Tetramer of two alpha and two beta subunits.

Its subcellular location is the cytoplasm. The catalysed reaction is tRNA(Gly) + glycine + ATP = glycyl-tRNA(Gly) + AMP + diphosphate. The polypeptide is Glycine--tRNA ligase beta subunit (Thermodesulfovibrio yellowstonii (strain ATCC 51303 / DSM 11347 / YP87)).